The following is a 585-amino-acid chain: Arginine--tRNA ligase (585 aa).

The short motif at 131–141 (ANPTGPMHVGH) is the 'HIGH' region element.

This sequence belongs to the class-I aminoacyl-tRNA synthetase family. As to quaternary structure, monomer.

It localises to the cytoplasm. It carries out the reaction tRNA(Arg) + L-arginine + ATP = L-arginyl-tRNA(Arg) + AMP + diphosphate. This is Arginine--tRNA ligase from Allorhizobium ampelinum (strain ATCC BAA-846 / DSM 112012 / S4) (Agrobacterium vitis (strain S4)).